Consider the following 482-residue polypeptide: Adenylyltransferase and sulfurtransferase uba4 (482 aa).

ATP-binding positions include Gly-93, Asp-114, 121–125, Lys-138, and 182–183; these read SNLHR and DN. The Zn(2+) site is built by Cys-231 and Cys-234. Cys-248 functions as the Glycyl thioester intermediate; for adenylyltransferase activity in the catalytic mechanism. Cys-309 and Cys-312 together coordinate Zn(2+). Positions 362 to 480 constitute a Rhodanese domain; it reads EEKEPTIIDV…WKEQVDPEWP (119 aa). The active-site Cysteine persulfide intermediate; for sulfurtransferase activity is the Cys-435.

This sequence in the N-terminal section; belongs to the HesA/MoeB/ThiF family. UBA4 subfamily. Requires Zn(2+) as cofactor.

It localises to the cytoplasm. The protein localises to the cytosol. The catalysed reaction is [molybdopterin-synthase sulfur-carrier protein]-C-terminal Gly-Gly + ATP + H(+) = [molybdopterin-synthase sulfur-carrier protein]-C-terminal Gly-Gly-AMP + diphosphate. It catalyses the reaction [molybdopterin-synthase sulfur-carrier protein]-C-terminal Gly-Gly-AMP + S-sulfanyl-L-cysteinyl-[cysteine desulfurase] + AH2 = [molybdopterin-synthase sulfur-carrier protein]-C-terminal-Gly-aminoethanethioate + L-cysteinyl-[cysteine desulfurase] + A + AMP + 2 H(+). Its pathway is tRNA modification; 5-methoxycarbonylmethyl-2-thiouridine-tRNA biosynthesis. It participates in cofactor biosynthesis; molybdopterin biosynthesis. Plays a central role in 2-thiolation of mcm(5)S(2)U at tRNA wobble positions of cytosolic tRNA(Lys), tRNA(Glu) and tRNA(Gln). Also essential during biosynthesis of the molybdenum cofactor. Acts by mediating the C-terminal thiocarboxylation of sulfur carriers urm1 and mocs2a. Its N-terminus first activates urm1 and mocs2a as acyl-adenylates (-COAMP), then the persulfide sulfur on the catalytic cysteine is transferred to urm1 and mocs2a to form thiocarboxylation (-COSH) of their C-terminus. The reaction probably involves hydrogen sulfide that is generated from the persulfide intermediate and that acts as a nucleophile towards urm1 and mocs2a. Subsequently, a transient disulfide bond is formed. Does not use thiosulfate as sulfur donor; nfs1 probably acting as a sulfur donor for thiocarboxylation reactions. This is Adenylyltransferase and sulfurtransferase uba4 from Aspergillus niger (strain ATCC MYA-4892 / CBS 513.88 / FGSC A1513).